The chain runs to 246 residues: MKPSDVRSKAFAMPLTSPAFPMGPYRFVDREFLIITYRTDPDRLREIVPEPLQVTEPLVHYEFIRMADSTGFGDYTESGQVIPVEYNGQAGGYTLAMYLDDHPPIAGGRELWGFPKKLASPTLHVNTDHILGTLDYGKVRVATGTMGYKHKELDIDEQTKRLAGPNFLLKIIPHVDGTARVCELVRYYMQDIKMKGAWTGPASLELAPHALAPVADLPVLEIVEARHLVADLTLGLGEVVYDYLAQ.

Lysine 116 acts as the Schiff-base intermediate with acetoacetate in catalysis.

This sequence belongs to the ADC family.

It catalyses the reaction acetoacetate + H(+) = acetone + CO2. Its function is as follows. Catalyzes the conversion of acetoacetate to acetone and carbon dioxide. The protein is Acetoacetate decarboxylase of Burkholderia cenocepacia (strain ATCC BAA-245 / DSM 16553 / LMG 16656 / NCTC 13227 / J2315 / CF5610) (Burkholderia cepacia (strain J2315)).